The following is a 316-amino-acid chain: Ribose-phosphate pyrophosphokinase (316 aa).

ATP contacts are provided by residues 39–41 (DGE) and 98–99 (RQ). Residues histidine 133 and aspartate 172 each coordinate Mg(2+). The active site involves lysine 195. Residues arginine 197, aspartate 221, and 225 to 229 (DTGGT) each bind D-ribose 5-phosphate.

This sequence belongs to the ribose-phosphate pyrophosphokinase family. Class I subfamily. Homohexamer. Mg(2+) is required as a cofactor.

The protein localises to the cytoplasm. The enzyme catalyses D-ribose 5-phosphate + ATP = 5-phospho-alpha-D-ribose 1-diphosphate + AMP + H(+). Its pathway is metabolic intermediate biosynthesis; 5-phospho-alpha-D-ribose 1-diphosphate biosynthesis; 5-phospho-alpha-D-ribose 1-diphosphate from D-ribose 5-phosphate (route I): step 1/1. Its function is as follows. Involved in the biosynthesis of the central metabolite phospho-alpha-D-ribosyl-1-pyrophosphate (PRPP) via the transfer of pyrophosphoryl group from ATP to 1-hydroxyl of ribose-5-phosphate (Rib-5-P). The protein is Ribose-phosphate pyrophosphokinase of Ralstonia nicotianae (strain ATCC BAA-1114 / GMI1000) (Ralstonia solanacearum).